The chain runs to 753 residues: Replication restart protein PriA (753 aa).

The 168-residue stretch at 228 to 395 folds into the Helicase ATP-binding domain; that stretch reads SLITTKFQTC…LSKKYTLSVL (168 aa). Position 241 to 248 (241 to 248) interacts with ATP; the sequence is GVTGSGKT. Residues 337–340 carry the DEAH box motif; it reads DEEH. Positions 458, 461, 467, 470, 485, 488, 499, and 502 each coordinate Zn(2+). The Helicase C-terminal domain occupies 491–646; it reads RLSKPITSCP…DFPAFYKEEI (156 aa).

The protein belongs to the helicase family. PriA subfamily. Component of the replication restart primosome. Requires Zn(2+) as cofactor.

It carries out the reaction Couples ATP hydrolysis with the unwinding of duplex DNA by translocating in the 3'-5' direction.. The catalysed reaction is ATP + H2O = ADP + phosphate + H(+). In terms of biological role, initiates the restart of stalled replication forks, which reloads the replicative helicase on sites other than the origin of replication. Recognizes and binds to abandoned replication forks and remodels them to uncover a helicase loading site. Promotes assembly of the primosome at these replication forks. This is Replication restart protein PriA from Chlamydia muridarum (strain MoPn / Nigg).